Here is a 319-residue protein sequence, read N- to C-terminus: Carbonic anhydrase, chloroplastic (319 aa).

Residues 1–98 (MSTINGCLTS…AASKVAQITS (98 aa)) constitute a chloroplast transit peptide.

It belongs to the beta-class carbonic anhydrase family. Homohexamer.

Its subcellular location is the plastid. It localises to the chloroplast stroma. The enzyme catalyses hydrogencarbonate + H(+) = CO2 + H2O. Its function is as follows. Reversible hydration of carbon dioxide. The polypeptide is Carbonic anhydrase, chloroplastic (Spinacia oleracea (Spinach)).